We begin with the raw amino-acid sequence, 396 residues long: Phosphoglycerate kinase (396 aa).

Residues Asp-21–Asn-23, Arg-36, His-59–Arg-62, Arg-119, and Arg-156 each bind substrate. ATP-binding positions include Lys-207, Glu-325, and Gly-352–Ser-355.

Belongs to the phosphoglycerate kinase family. In terms of assembly, monomer.

Its subcellular location is the cytoplasm. The catalysed reaction is (2R)-3-phosphoglycerate + ATP = (2R)-3-phospho-glyceroyl phosphate + ADP. It participates in carbohydrate degradation; glycolysis; pyruvate from D-glyceraldehyde 3-phosphate: step 2/5. This chain is Phosphoglycerate kinase, found in Lacticaseibacillus casei (strain BL23) (Lactobacillus casei).